The following is a 765-amino-acid chain: Dipeptidyl peptidase 4 (765 aa).

At 1–6 (MKTPWK) the chain is on the cytoplasmic side. Residues 7–29 (VLLGLLGLAALITIITVPVVLLN) traverse the membrane as a helical; Signal-anchor for type II membrane protein segment. The Extracellular segment spans residues 30-765 (KGNDAAADSR…HFIKQCFSLP (736 aa)). 9 N-linked (GlcNAc...) asparagine glycosylation sites follow: asparagine 84, asparagine 91, asparagine 149, asparagine 178, asparagine 228, asparagine 280, asparagine 320, asparagine 330, and asparagine 331. 3 disulfides stabilise this stretch: cysteine 384–cysteine 393, cysteine 443–cysteine 446, and cysteine 453–cysteine 471. N-linked (GlcNAc...) asparagine glycosylation is present at asparagine 519. Serine 629 (charge relay system) is an active-site residue. Cysteine 648 and cysteine 761 are joined by a disulfide. Asparagine 684 is a glycosylation site (N-linked (GlcNAc...) asparagine). Residues aspartate 707 and histidine 739 each act as charge relay system in the active site.

It belongs to the peptidase S9B family. DPPIV subfamily. As to quaternary structure, monomer. Homodimer. Heterodimer with Seprase (FAP). Requires homodimerization for optimal dipeptidyl peptidase activity and T-cell costimulation. Found in a membrane raft complex, at least composed of BCL10, CARD11, DPP4 and IKBKB. Associates with collagen. Interacts with PTPRC; the interaction is enhanced in an interleukin-12-dependent manner in activated lymphocytes. Interacts (extracellular domain) with ADA; does not inhibit its dipeptidyl peptidase activity. Interacts with CAV1 (via the N-terminus); the interaction is direct. Interacts (via cytoplasmic tail) with CARD11 (via PDZ domain); its homodimerization is necessary for interaction with CARD11. Interacts with IGF2R; the interaction is direct. Interacts with GPC3. Post-translationally, the soluble form (Dipeptidyl peptidase 4 soluble form also named SDPP) derives from the membrane form (Dipeptidyl peptidase 4 membrane form also named MDPP) by proteolytic processing. N- and O-Glycosylated. In terms of processing, phosphorylated. Mannose 6-phosphate residues in the carbohydrate moiety are necessary for interaction with IGF2R in activated T-cells. Mannose 6-phosphorylation is induced during T-cell activation.

It is found in the secreted. Its subcellular location is the cell membrane. It localises to the apical cell membrane. The protein localises to the cell projection. The protein resides in the invadopodium membrane. It is found in the lamellipodium membrane. Its subcellular location is the cell junction. It localises to the membrane raft. The catalysed reaction is Release of an N-terminal dipeptide, Xaa-Yaa-|-Zaa-, from a polypeptide, preferentially when Yaa is Pro, provided Zaa is neither Pro nor hydroxyproline.. With respect to regulation, inhibited by GPC3 and diprotin A. In terms of biological role, cell surface glycoprotein receptor involved in the costimulatory signal essential for T-cell receptor (TCR)-mediated T-cell activation. Acts as a positive regulator of T-cell coactivation, by binding at least ADA, CAV1, IGF2R, and PTPRC. Its binding to CAV1 and CARD11 induces T-cell proliferation and NF-kappa-B activation in a T-cell receptor/CD3-dependent manner. Its interaction with ADA also regulates lymphocyte-epithelial cell adhesion. In association with FAP is involved in the pericellular proteolysis of the extracellular matrix (ECM), the migration and invasion of endothelial cells into the ECM. May be involved in the promotion of lymphatic endothelial cells adhesion, migration and tube formation. When overexpressed, enhanced cell proliferation, a process inhibited by GPC3. Also acts as a serine exopeptidase with a dipeptidyl peptidase activity that regulates various physiological processes by cleaving peptides in the circulation, including many chemokines, mitogenic growth factors, neuropeptides and peptide hormones. Removes N-terminal dipeptides sequentially from polypeptides having unsubstituted N-termini provided that the penultimate residue is proline. The polypeptide is Dipeptidyl peptidase 4 (DPP4) (Felis catus (Cat)).